A 198-amino-acid polypeptide reads, in one-letter code: Recombination protein RecR (198 aa).

The C4-type zinc-finger motif lies at 58 to 73 (CSVCGNFTDTDPCAIC). One can recognise a Toprim domain in the interval 81-175 (DIICVVEQPK…KVTRIAAGIP (95 aa)).

Belongs to the RecR family.

May play a role in DNA repair. It seems to be involved in an RecBC-independent recombinational process of DNA repair. It may act with RecF and RecO. The chain is Recombination protein RecR from Clostridium perfringens (strain ATCC 13124 / DSM 756 / JCM 1290 / NCIMB 6125 / NCTC 8237 / Type A).